The chain runs to 691 residues: Lipase 2 (691 aa).

Residues 1-37 (MLRGQEERKYSIRKYSIGVVSVLAATMFVVTSHEAQA) form the signal peptide. Positions 34–267 (EAQASEKIPT…KPTDKNTDNK (234 aa)) are disordered. A propeptide spanning residues 38-296 (SEKIPTTNAA…ADAKKVRPLK (259 aa)) is cleaved from the precursor. The segment covering 41 to 72 (IPTTNAAAQKETLNQPGEQGNAITSHQMQSGK) has biased composition (polar residues). Positions 73–82 (QLDDMHKENG) are enriched in basic and acidic residues. Composition is skewed to polar residues over residues 94 to 115 (LQSS…NDNQ), 125 to 135 (SKQSHQNNATN), 142 to 172 (DQIQ…QPSI), and 186 to 196 (PTSTTPPSNDK). Basic and acidic residues-rich tracts occupy residues 197-214 (TAPK…KHPN) and 258-267 (KPTDKNTDNK). Residue Ser413 is the Nucleophile of the active site. Ca(2+) is bound at residue Gly580. Asp604 (charge relay system) is an active-site residue. Asp645 lines the Ca(2+) pocket. The active-site Charge relay system is the His646. Asp648, Asp653, and Asp656 together coordinate Ca(2+).

It belongs to the AB hydrolase superfamily. Lipase family.

The protein localises to the secreted. It catalyses the reaction a triacylglycerol + H2O = a diacylglycerol + a fatty acid + H(+). The sequence is that of Lipase 2 (lip2) from Staphylococcus aureus (strain MRSA252).